A 492-amino-acid polypeptide reads, in one-letter code: Protein nucleotidyltransferase YdiU (492 aa).

ATP-binding residues include G91, G93, R94, K114, D126, G127, R180, and R187. D256 acts as the Proton acceptor in catalysis. Mg(2+) contacts are provided by N257 and D266. An ATP-binding site is contributed by D266.

Belongs to the SELO family. It depends on Mg(2+) as a cofactor. Mn(2+) is required as a cofactor.

The catalysed reaction is L-seryl-[protein] + ATP = 3-O-(5'-adenylyl)-L-seryl-[protein] + diphosphate. It catalyses the reaction L-threonyl-[protein] + ATP = 3-O-(5'-adenylyl)-L-threonyl-[protein] + diphosphate. It carries out the reaction L-tyrosyl-[protein] + ATP = O-(5'-adenylyl)-L-tyrosyl-[protein] + diphosphate. The enzyme catalyses L-histidyl-[protein] + UTP = N(tele)-(5'-uridylyl)-L-histidyl-[protein] + diphosphate. The catalysed reaction is L-seryl-[protein] + UTP = O-(5'-uridylyl)-L-seryl-[protein] + diphosphate. It catalyses the reaction L-tyrosyl-[protein] + UTP = O-(5'-uridylyl)-L-tyrosyl-[protein] + diphosphate. Its function is as follows. Nucleotidyltransferase involved in the post-translational modification of proteins. It can catalyze the addition of adenosine monophosphate (AMP) or uridine monophosphate (UMP) to a protein, resulting in modifications known as AMPylation and UMPylation. The polypeptide is Protein nucleotidyltransferase YdiU (Synechococcus elongatus (strain ATCC 33912 / PCC 7942 / FACHB-805) (Anacystis nidulans R2)).